A 189-amino-acid polypeptide reads, in one-letter code: Elongation factor P 2 (189 aa).

It belongs to the elongation factor P family.

Its subcellular location is the cytoplasm. It functions in the pathway protein biosynthesis; polypeptide chain elongation. Involved in peptide bond synthesis. Stimulates efficient translation and peptide-bond synthesis on native or reconstituted 70S ribosomes in vitro. Probably functions indirectly by altering the affinity of the ribosome for aminoacyl-tRNA, thus increasing their reactivity as acceptors for peptidyl transferase. This is Elongation factor P 2 from Mesorhizobium japonicum (strain LMG 29417 / CECT 9101 / MAFF 303099) (Mesorhizobium loti (strain MAFF 303099)).